Here is a 243-residue protein sequence, read N- to C-terminus: 3-deoxy-manno-octulosonate cytidylyltransferase (243 aa).

This sequence belongs to the KdsB family.

Its subcellular location is the cytoplasm. It carries out the reaction 3-deoxy-alpha-D-manno-oct-2-ulosonate + CTP = CMP-3-deoxy-beta-D-manno-octulosonate + diphosphate. The protein operates within nucleotide-sugar biosynthesis; CMP-3-deoxy-D-manno-octulosonate biosynthesis; CMP-3-deoxy-D-manno-octulosonate from 3-deoxy-D-manno-octulosonate and CTP: step 1/1. Its pathway is bacterial outer membrane biogenesis; lipopolysaccharide biosynthesis. Its function is as follows. Activates KDO (a required 8-carbon sugar) for incorporation into bacterial lipopolysaccharide in Gram-negative bacteria. The chain is 3-deoxy-manno-octulosonate cytidylyltransferase from Helicobacter pylori (strain J99 / ATCC 700824) (Campylobacter pylori J99).